Reading from the N-terminus, the 3859-residue chain is Transformation/transcription domain-associated protein (3859 aa).

At Ala2 the chain carries N-acetylalanine. Over residues 491–526 (PAAPGPAPSPAPVPAPPPPPPPPPPATPVTPAPVPP) the composition is skewed to pro residues. Residues 491–541 (PAAPGPAPSPAPVPAPPPPPPPPPPATPVTPAPVPPFEKQGEKDKEDKQTF) are disordered. The segment covering 529–539 (KQGEKDKEDKQ) has biased composition (basic and acidic residues). Residue Ser1628 is modified to Phosphoserine. The interaction with TP53 stretch occupies residues 2010–2388 (SEVVIKWELQ…SPMAANQTPT (379 aa)). The disordered stretch occupies residues 2023-2044 (DQQPDSDMDPNSSGEGVNSVSS). Low complexity predominate over residues 2033 to 2044 (NSSGEGVNSVSS). A Bipartite nuclear localization signal motif is present at residues 2047–2062 (KRGLSVDSAQEVKRFR). Residues Ser2051 and Ser2077 each carry the phosphoserine modification. Lys2543 is covalently cross-linked (Glycyl lysine isopeptide (Lys-Gly) (interchain with G-Cter in SUMO2)). The span at 2543-2554 (KQEPRERENSES) shows a compositional bias: basic and acidic residues. Positions 2543 to 2578 (KQEPRERENSESKEEDVEIDIELAPGDQTSTPKTKE) are disordered. The FAT domain occupies 2692–3275 (VLKYLGKTHN…YFPIRTLYLT (584 aa)). Lys3078 carries the post-translational modification N6-acetyllysine. The PI3K/PI4K catalytic domain maps to 3500–3823 (MPRVEIVQKH…AVTAIMTRLH (324 aa)). Residues 3506-3512 (VQKHNTA) form a G-loop region. The tract at residues 3687 to 3695 (HLNRLNPEM) is catalytic loop. The tract at residues 3707–3732 (VAYFRFDINDATGDLDANRPVPFRLT) is activation loop. The FATC domain maps to 3827–3859 (QFEGGESKVNTLVAAANSLDNLCRMDPAWHPWL).

This sequence belongs to the PI3/PI4-kinase family. TRA1 subfamily. In terms of assembly, interacts with MYC, E2F1 and E2F4 transcription factors. Interacts directly with p53/TP53. Interacts with GCN5L2. Component of various HAT complexes. Component of the PCAF complex, at least composed of TADA2L/ADA2, SUPT3H, TADA3L/ADA3, TAF5L/PAF65-beta, TAF6L/PAF65-alpha, TAF10/TAFII30, TAF12/TAFII20, TAF9/TAFII31 and TRRAP. Component of the TFTC-HAT complex, at least composed of TAF5L, TAF6L, TADA3L, SUPT3H/SPT3, TAF2/TAFII150, TAF4/TAFII135, TAF5/TAFII100, GCN5L2/GCN5, TAF10 and TRRAP. Component of the NuA4 histone acetyltransferase complex which contains the catalytic subunit KAT5/TIP60 and the subunits EP400, TRRAP/PAF400, BRD8/SMAP, EPC1, DMAP1/DNMAP1, RUVBL1/TIP49, RUVBL2, ING3, actin, ACTL6A/BAF53A, MORF4L1/MRG15, MORF4L2/MRGX, MRGBP, YEATS4/GAS41, VPS72/YL1 and MEAF6. Component of the STAGA complex, at least composed of SUPT3H, GCN5L2, SUPT7L, TAF5L, TAF6L, TADA3L, TAD1L, TAF10, TAF12, TRRAP and TAF9. The STAGA core complex is associated with a subcomplex required for histone deubiquitination composed of ATXN7L3, ENY2 and USP22. Component of the BAF53 complex, at least composed of BAF53A, RUVBL1, SMARCA4/BRG1, and TRRAP, which preferentially acetylates histone H4 (and H2A) within nucleosomes. Interacts with NPAT. Interaction with TELO2 and TTI1. Component of a SWR1-like complex.

It localises to the nucleus. Adapter protein, which is found in various multiprotein chromatin complexes with histone acetyltransferase activity (HAT), which gives a specific tag for epigenetic transcription activation. Component of the NuA4 histone acetyltransferase complex which is responsible for acetylation of nucleosomal histones H4 and H2A. Plays a central role in MYC transcription activation, and also participates in cell transformation by MYC. Required for p53/TP53-, E2F1- and E2F4-mediated transcription activation. Also involved in transcription activation mediated by the adenovirus E1A, a viral oncoprotein that deregulates transcription of key genes. Probably acts by linking transcription factors such as E1A, MYC or E2F1 to HAT complexes such as STAGA thereby allowing transcription activation. Probably not required in the steps following histone acetylation in processes of transcription activation. May be required for the mitotic checkpoint and normal cell cycle progression. Component of a SWR1-like complex that specifically mediates the removal of histone H2A.Z/H2AZ1 from the nucleosome. May play a role in the formation and maintenance of the auditory system. The sequence is that of Transformation/transcription domain-associated protein (TRRAP) from Homo sapiens (Human).